The sequence spans 1117 residues: Sodium-driven chloride bicarbonate exchanger (1117 aa).

The segment covering 1–14 has biased composition (polar residues); the sequence is MQSGTCESFQSLSH. Disordered stretches follow at residues 1 to 26, 57 to 94, 244 to 312, and 456 to 475; these read MQSGTCESFQSLSHQRNDEEAVVDRG, GRKSHRRHRHRGHKHRKRDRERDSGLEDGRESPSFDTP, KQSE…PHQQ, and NGTAAHGEAEPHGGHSGPEL. Residues 1 to 508 are Cytoplasmic-facing; the sequence is MQSGTCESFQ…DFTDALSLQC (508 aa). Basic and acidic residues predominate over residues 15–26; sequence QRNDEEAVVDRG. Over residues 58–75 the composition is skewed to basic residues; sequence RKSHRRHRHRGHKHRKRD. Residues 76-89 show a composition bias toward basic and acidic residues; sequence RERDSGLEDGRESP. Serine 88 is modified (phosphoserine). Threonine 93 is modified (phosphothreonine). Over residues 247–263 the composition is skewed to polar residues; sequence EPNSMDKNAGQVVSPQS. Serine 275 bears the Phosphoserine mark. The chain crosses the membrane as a helical span at residues 509 to 529; the sequence is LASFLFLYCACMSPVITFGGL. At 530 to 537 the chain is on the extracellular side; that stretch reads LGEATEGR. Residues 538–558 traverse the membrane as a helical segment; that stretch reads ISAIESLFGASMTGIAYSLFG. Over 559–561 the chain is Cytoplasmic; sequence GQP. A helical transmembrane segment spans residues 562–582; it reads LTILGSTGPVLVFEKILFKFC. At 583-595 the chain is on the extracellular side; sequence KEYGLSYLSLRAS. The helical transmembrane segment at 596-616 threads the bilayer; sequence IGLWTATLCIILVATDASSLV. Over 617–625 the chain is Cytoplasmic; the sequence is CYITRFTEE. A helical transmembrane segment spans residues 626–646; sequence AFASLICIIFIYEALEKLFEL. Residues 647–719 are Extracellular-facing; that stretch reads SEAYPINMHN…VGRACGHEHP (73 aa). Residues asparagine 673, asparagine 676, asparagine 686, and asparagine 696 are each glycosylated (N-linked (GlcNAc...) asparagine). Residues 720 to 740 traverse the membrane as a helical segment; sequence YVPDVLFWSVILFFSTVTLSA. Over 741-761 the chain is Cytoplasmic; sequence TLKQFKTSRYFPTKVRSIVSD. Residues 762–782 traverse the membrane as a helical segment; it reads FAVFLTILCMVLIDYAIGIPS. Residues 783–808 lie on the Extracellular side of the membrane; that stretch reads PKLQVPSVFKPTRDDRGWFVTPLGPN. The chain crosses the membrane as a helical span at residues 809-829; that stretch reads PWWTVIAAIIPALLCTILIFM. The Cytoplasmic segment spans residues 830–854; that stretch reads DQQITAVIINRKEHKLKKGCGYHLD. Residues 855-875 traverse the membrane as a helical segment; that stretch reads LLMVAVMLGVCSIMGLPWFVA. Over 876 to 911 the chain is Extracellular; the sequence is ATVLSITHVNSLKLESECSAPGEQPKFLGIREQRVT. A helical transmembrane segment spans residues 912–932; that stretch reads GLMIFILMGSSVFMTSILKFI. The Cytoplasmic segment spans residues 933–934; the sequence is PM. A helical membrane pass occupies residues 935-955; it reads PVLYGVFLYMGASSLKGIQFF. Residues 956–997 are Extracellular-facing; that stretch reads DRIKLFWMPAKHQPDFIYLRHVPLRKVHLFTVIQMSCLGLLW. The chain crosses the membrane as a helical span at residues 998–1018; that stretch reads IIKVSRAAIVFPMMVLALVFV. At 1019–1117 the chain is on the cytoplasmic side; that stretch reads RKLMDFLFTK…SSFPSKSSPS (99 aa). Serine 1056 and serine 1084 each carry phosphoserine.

The protein belongs to the anion exchanger (TC 2.A.31) family. In terms of processing, N-glycosylated.

It localises to the basolateral cell membrane. Its subcellular location is the apical cell membrane. The protein localises to the cell projection. It is found in the dendrite. The protein resides in the axon. It localises to the perikaryon. Its subcellular location is the presynapse. The protein localises to the postsynapse. Functionally, sodium/bicarbonate cotransporter which plays an important role in regulating intracellular pH. Has been shown to act as a sodium/bicarbonate cotransporter in exchange for intracellular chloride. Has also been shown to act as a sodium/biocarbonate cotransporter which does not couple net influx of bicarbonate to net efflux of chloride, with the observed chloride efflux being due to chloride self-exchange. Controls neuronal pH and may contribute to the secretion of cerebrospinal fluid. Acting on presynaptic intracellular pH, it promotes GABA release, reduces the excitability of CA1 pyramidal neurons, and modulates short-term synaptic plasticity. Required in retinal cells to maintain normal pH which is necessary for normal vision. In the kidney, likely to mediate bicarbonate reclamation in the apical membrane of the proximal tubules. The protein is Sodium-driven chloride bicarbonate exchanger of Bos taurus (Bovine).